The sequence spans 492 residues: UDP-N-acetylmuramoyl-L-alanyl-D-glutamate--2,6-diaminopimelate ligase (492 aa).

Residue Ser30 participates in UDP-N-acetyl-alpha-D-muramoyl-L-alanyl-D-glutamate binding. 114 to 120 (GTNGKTS) lines the ATP pocket. UDP-N-acetyl-alpha-D-muramoyl-L-alanyl-D-glutamate-binding positions include 156–157 (TT), Ser183, Gln189, and Arg191. The residue at position 223 (Lys223) is an N6-carboxylysine. Residues Arg389, 413–416 (DNPR), Gly462, and Glu466 each bind meso-2,6-diaminopimelate. A Meso-diaminopimelate recognition motif motif is present at residues 413 to 416 (DNPR).

This sequence belongs to the MurCDEF family. MurE subfamily. Mg(2+) is required as a cofactor. Post-translationally, carboxylation is probably crucial for Mg(2+) binding and, consequently, for the gamma-phosphate positioning of ATP.

The protein localises to the cytoplasm. It catalyses the reaction UDP-N-acetyl-alpha-D-muramoyl-L-alanyl-D-glutamate + meso-2,6-diaminopimelate + ATP = UDP-N-acetyl-alpha-D-muramoyl-L-alanyl-gamma-D-glutamyl-meso-2,6-diaminopimelate + ADP + phosphate + H(+). The protein operates within cell wall biogenesis; peptidoglycan biosynthesis. Functionally, catalyzes the addition of meso-diaminopimelic acid to the nucleotide precursor UDP-N-acetylmuramoyl-L-alanyl-D-glutamate (UMAG) in the biosynthesis of bacterial cell-wall peptidoglycan. The chain is UDP-N-acetylmuramoyl-L-alanyl-D-glutamate--2,6-diaminopimelate ligase from Neisseria meningitidis serogroup B (strain ATCC BAA-335 / MC58).